The following is a 186-amino-acid chain: Putative 3-methyladenine DNA glycosylase (186 aa).

It belongs to the DNA glycosylase MPG family.

In Borreliella burgdorferi (strain ATCC 35210 / DSM 4680 / CIP 102532 / B31) (Borrelia burgdorferi), this protein is Putative 3-methyladenine DNA glycosylase.